The following is a 155-amino-acid chain: uncharacterized protein (155 aa).

Disordered stretches follow at residues 24-63 (RVGY…VVLK) and 80-155 (KAAK…DENE). The residue at position 50 (serine 50) is a Phosphoserine. N6-acetyllysine is present on lysine 108. Residues 128-147 (KQSSVRKNSQKQIKNSSLLS) are compositionally biased toward polar residues. A phosphoserine mark is found at serine 130, serine 147, and serine 150.

This is an uncharacterized protein from Mus musculus (Mouse).